We begin with the raw amino-acid sequence, 151 residues long: Protein-export protein SecB (151 aa).

The protein belongs to the SecB family. Homotetramer, a dimer of dimers. One homotetramer interacts with 1 SecA dimer.

Its subcellular location is the cytoplasm. Functionally, one of the proteins required for the normal export of preproteins out of the cell cytoplasm. It is a molecular chaperone that binds to a subset of precursor proteins, maintaining them in a translocation-competent state. It also specifically binds to its receptor SecA. The sequence is that of Protein-export protein SecB from Acinetobacter baylyi (strain ATCC 33305 / BD413 / ADP1).